The following is a 334-amino-acid chain: Glyoxylate reductase (334 aa).

NADP(+) is bound by residues 158–161 (FGRI), 180–182 (SRT), and 239–241 (IAR). Residues arginine 241 and glutamate 270 contribute to the active site. Histidine 288 functions as the Proton donor in the catalytic mechanism. 288–290 (HIG) is an NADP(+) binding site.

It belongs to the D-isomer specific 2-hydroxyacid dehydrogenase family. GyaR subfamily. Homodimer.

Its subcellular location is the cytoplasm. The catalysed reaction is glycolate + NAD(+) = glyoxylate + NADH + H(+). The chain is Glyoxylate reductase from Thermococcus gammatolerans (strain DSM 15229 / JCM 11827 / EJ3).